A 468-amino-acid polypeptide reads, in one-letter code: Phosphoglucosamine mutase (468 aa).

Residue Ser112 is the Phosphoserine intermediate of the active site. Positions 112, 254, 256, and 258 each coordinate Mg(2+). Ser112 is modified (phosphoserine).

It belongs to the phosphohexose mutase family. Requires Mg(2+) as cofactor. Post-translationally, activated by phosphorylation.

It catalyses the reaction alpha-D-glucosamine 1-phosphate = D-glucosamine 6-phosphate. In terms of biological role, catalyzes the conversion of glucosamine-6-phosphate to glucosamine-1-phosphate. The protein is Phosphoglucosamine mutase of Prochlorococcus marinus (strain MIT 9313).